A 200-amino-acid chain; its full sequence is THO complex subunit tho5 (200 aa).

The protein belongs to the THOC5 family. Component of the THO and TREX complexes.

The protein resides in the cytoplasm. It is found in the nucleus. Its function is as follows. Component the THO subcomplex of the TREX complex, which operates in coupling transcription elongation to mRNA export. The THO complex is recruited to transcribed genes and moves along the gene with the elongating polymerase during transcription. THO is important for stabilizing nascent RNA in the RNA polymerase II elongation complex by preventing formation of DNA:RNA hybrids behind the elongating polymerase. The THO complex is also required to maintain TRAMP complex occupancy at sites of snoRNA transcription thus promoting exosome-mediated degradation of snoRNA precursors. This chain is THO complex subunit tho5, found in Schizosaccharomyces pombe (strain 972 / ATCC 24843) (Fission yeast).